The chain runs to 66 residues: Phylloseptin-S6 (66 aa).

Positions 1-22 (MAFLKKSLFLVLFLGLVSLSIC) are cleaved as a signal peptide. The propeptide occupies 23–46 (EEEKRETEEEEHDQEEDDKSEEKR). Positions 25-44 (EKRETEEEEHDQEEDDKSEE) are disordered. Positions 30–41 (EEEEHDQEEDDK) are enriched in acidic residues. Position 65 is a leucine amide (leucine 65).

It belongs to the frog skin active peptide (FSAP) family. Phylloseptin subfamily. As to expression, expressed by the skin glands.

Its subcellular location is the secreted. It is found in the target cell membrane. Its function is as follows. Antimicrobial peptide with high activity against Gram-positive bacteria, low activity against Gram-negative bacteria, and moderate activity against fungi. Acts by causing bacterial membrane disruption inducing leakage of the intracellular content followed by cell death. It adopts an alpha-helical amphipathic structure in membrane environments. Also shows highly potent antiparasitic activity against Leishmania species. Shows moderate hemolytic activity on human erythrocytes. Is also active on human monocytes. In Phyllomedusa sauvagei (Sauvage's leaf frog), this protein is Phylloseptin-S6.